The chain runs to 236 residues: Small ribosomal subunit protein uS3 (236 aa).

Residues Val-39 to Arg-107 form the KH type-2 domain.

Belongs to the universal ribosomal protein uS3 family. As to quaternary structure, part of the 30S ribosomal subunit. Forms a tight complex with proteins S10 and S14.

Functionally, binds the lower part of the 30S subunit head. Binds mRNA in the 70S ribosome, positioning it for translation. The sequence is that of Small ribosomal subunit protein uS3 from Blochmanniella pennsylvanica (strain BPEN).